Reading from the N-terminus, the 104-residue chain is uncharacterized protein (104 aa).

Residues 62-92 (SSPAASSHPRKRGKEKKERTPTERLAAPARK) are disordered.

This is an uncharacterized protein from Human adenovirus B serotype 7 (HAdV-7).